Here is a 178-residue protein sequence, read N- to C-terminus: Large ribosomal subunit protein uL6 (178 aa).

Belongs to the universal ribosomal protein uL6 family. In terms of assembly, part of the 50S ribosomal subunit.

In terms of biological role, this protein binds to the 23S rRNA, and is important in its secondary structure. It is located near the subunit interface in the base of the L7/L12 stalk, and near the tRNA binding site of the peptidyltransferase center. This Helicobacter pylori (strain J99 / ATCC 700824) (Campylobacter pylori J99) protein is Large ribosomal subunit protein uL6.